The following is a 329-amino-acid chain: Thioredoxin-like fold domain-containing protein MRL7L homolog, chloroplastic (329 aa).

Residues 1–46 (MALQSCCSSSASVPATCSALCLAEATRAASLFVRPRAAARRLVLAR) constitute a chloroplast transit peptide. The interval 58 to 91 (AVQLVLGGRARDDGSESESSDDEDDDEPMQMTDE) is disordered. Acidic residues predominate over residues 72–85 (SESESSDDEDDDEP).

The protein resides in the plastid. It is found in the chloroplast stroma. Its function is as follows. Plays an essential role in early steps of chloroplast development. Involved in the regulation of plastid gene expression. Required for the proper function of the plastid transcriptional machinery and protein accumulation in thylakoid membranes. May function as molecular chaperone to ensure proper organization of the nucleoids in chloroplasts. This is Thioredoxin-like fold domain-containing protein MRL7L homolog, chloroplastic from Oryza sativa subsp. japonica (Rice).